Reading from the N-terminus, the 335-residue chain is Large ribosomal subunit protein uL3 (335 aa).

The interval 1–20 (MATIHRPRRGSLAFSPRKRA) is disordered.

This sequence belongs to the universal ribosomal protein uL3 family. Part of the 50S ribosomal subunit. Forms a cluster with proteins L14 and L24e.

Its function is as follows. One of the primary rRNA binding proteins, it binds directly near the 3'-end of the 23S rRNA, where it nucleates assembly of the 50S subunit. The polypeptide is Large ribosomal subunit protein uL3 (Methanothrix thermoacetophila (strain DSM 6194 / JCM 14653 / NBRC 101360 / PT) (Methanosaeta thermophila)).